Consider the following 559-residue polypeptide: Coiled-coil domain-containing protein 78 (559 aa).

Basic and acidic residues predominate over residues M1 to T19. A disordered region spans residues M1 to N20. Coiled-coil stretches lie at residues T9–V327 and Q419–A541.

It belongs to the CCDC78 family. Restricted to multiciliated cells.

The protein localises to the cytoplasm. It localises to the cytoskeleton. Its subcellular location is the microtubule organizing center. It is found in the centrosome. The protein resides in the centriole. Functionally, component of the deuterosome, a structure that promotes de novo centriole amplification in multiciliated cells that can generate more than 100 centrioles. Deuterosome-mediated centriole amplification occurs in terminally differentiated multiciliated cells (G1/0) and not in S phase. Essential for centriole amplification and is required for cep152 localization to the deuterosome. This chain is Coiled-coil domain-containing protein 78 (ccdc78), found in Xenopus laevis (African clawed frog).